A 542-amino-acid chain; its full sequence is CTP synthase (542 aa).

The interval 1–265 (MARYVFITGG…DDEVLAAFGI (265 aa)) is amidoligase domain. S13 provides a ligand contact to CTP. Residue S13 coordinates UTP. ATP is bound by residues 14-19 (SLGKGI) and D71. 2 residues coordinate Mg(2+): D71 and E139. CTP is bound by residues 146–148 (DIE), 186–191 (KTKPTQ), and K222. Residues 186 to 191 (KTKPTQ) and K222 contribute to the UTP site. The 251-residue stretch at 291-541 (TIAIVGKYTG…IEAATEQSRL (251 aa)) folds into the Glutamine amidotransferase type-1 domain. L-glutamine is bound at residue G353. The active-site Nucleophile; for glutamine hydrolysis is the C380. L-glutamine contacts are provided by residues 381–384 (FGMQ), E404, and R469. Residues H514 and E516 contribute to the active site.

It belongs to the CTP synthase family. As to quaternary structure, homotetramer.

It carries out the reaction UTP + L-glutamine + ATP + H2O = CTP + L-glutamate + ADP + phosphate + 2 H(+). It catalyses the reaction L-glutamine + H2O = L-glutamate + NH4(+). The catalysed reaction is UTP + NH4(+) + ATP = CTP + ADP + phosphate + 2 H(+). Its pathway is pyrimidine metabolism; CTP biosynthesis via de novo pathway; CTP from UDP: step 2/2. Allosterically activated by GTP, when glutamine is the substrate; GTP has no effect on the reaction when ammonia is the substrate. The allosteric effector GTP functions by stabilizing the protein conformation that binds the tetrahedral intermediate(s) formed during glutamine hydrolysis. Inhibited by the product CTP, via allosteric rather than competitive inhibition. Its function is as follows. Catalyzes the ATP-dependent amination of UTP to CTP with either L-glutamine or ammonia as the source of nitrogen. Regulates intracellular CTP levels through interactions with the four ribonucleotide triphosphates. The chain is CTP synthase from Rhizobium johnstonii (strain DSM 114642 / LMG 32736 / 3841) (Rhizobium leguminosarum bv. viciae).